Here is a 291-residue protein sequence, read N- to C-terminus: ATP synthase subunit a (291 aa).

A run of 5 helical transmembrane segments spans residues Ile48–Trp68, Ile108–Ile128, Asp161–Ile181, Leu241–Trp261, and Ala262–Val282.

The protein belongs to the ATPase A chain family. As to quaternary structure, F-type ATPases have 2 components, CF(1) - the catalytic core - and CF(0) - the membrane proton channel. CF(1) has five subunits: alpha(3), beta(3), gamma(1), delta(1), epsilon(1). CF(0) has three main subunits: a(1), b(2) and c(9-12). The alpha and beta chains form an alternating ring which encloses part of the gamma chain. CF(1) is attached to CF(0) by a central stalk formed by the gamma and epsilon chains, while a peripheral stalk is formed by the delta and b chains.

Its subcellular location is the cell inner membrane. Key component of the proton channel; it plays a direct role in the translocation of protons across the membrane. This chain is ATP synthase subunit a, found in Acinetobacter baylyi (strain ATCC 33305 / BD413 / ADP1).